A 379-amino-acid chain; its full sequence is Cytochrome-c peroxidase IdrP1 (379 aa).

The N-terminal stretch at 1 to 24 (MNNRKPLQLSLLVASLAVAFTASA) is a signal peptide. Cytochrome c domains are found at residues 50-158 (EKIA…DAFK) and 204-355 (TSQK…EALS). Heme c-binding residues include Cys72, Cys75, His76, Cys219, Cys222, and His223.

The iodate reductase (Idr) complex is composed of a molybdopterin-dependent iodate reductase (IdrA and IdrB subunits) and two associated peroxidases (IdrP1 and IdrP2). The cofactor is heme c.

It localises to the periplasm. The enzyme catalyses 2 Fe(II)-[cytochrome c] + H2O2 + 2 H(+) = 2 Fe(III)-[cytochrome c] + 2 H2O. Involved in iodate respiration. Probably reduces the H(2)O(2) produced by IdrA/IdrB to H(2)O, using a reduced cytochrome c as the electron donor. In Pseudomonas sp. (strain SCT), this protein is Cytochrome-c peroxidase IdrP1.